A 495-amino-acid chain; its full sequence is Protein BFR2 (495 aa).

Disordered regions lie at residues 10-155 (ISQL…DSSA) and 462-495 (FNED…RIFG). Residues 23 to 45 (IENFEDRDDGSESGGDVDYDSDL) show a composition bias toward acidic residues. A compositionally biased stretch (basic and acidic residues) spans 46 to 62 (ATEHYVKVGKSKLRDDA). Residues 81 to 151 (DDEDEDGDGA…SDEELSENEN (71 aa)) show a composition bias toward acidic residues.

It belongs to the AATF family.

The protein localises to the nucleus. The protein resides in the nucleolus. This Yarrowia lipolytica (strain CLIB 122 / E 150) (Yeast) protein is Protein BFR2 (BFR2).